The chain runs to 192 residues: Large ribosomal subunit protein uL5 (192 aa).

Belongs to the universal ribosomal protein uL5 family. Part of the 50S ribosomal subunit; part of the 5S rRNA/L5/L18/L25 subcomplex. Contacts the 5S rRNA and the P site tRNA. Forms a bridge to the 30S subunit in the 70S ribosome.

Functionally, this is one of the proteins that bind and probably mediate the attachment of the 5S RNA into the large ribosomal subunit, where it forms part of the central protuberance. In the 70S ribosome it contacts protein S13 of the 30S subunit (bridge B1b), connecting the 2 subunits; this bridge is implicated in subunit movement. Contacts the P site tRNA; the 5S rRNA and some of its associated proteins might help stabilize positioning of ribosome-bound tRNAs. The sequence is that of Large ribosomal subunit protein uL5 from Paenarthrobacter aurescens (strain TC1).